A 256-amino-acid polypeptide reads, in one-letter code: UPF0644 protein PB2B4.06 (256 aa).

Residues 34-56 (GVVYAGVSGTCAAAGYMFGNFVM) traverse the membrane as a helical segment.

The protein belongs to the UPF0644 family.

It localises to the mitochondrion membrane. In Schizosaccharomyces pombe (strain 972 / ATCC 24843) (Fission yeast), this protein is UPF0644 protein PB2B4.06.